A 93-amino-acid polypeptide reads, in one-letter code: Putative septation protein SpoVG (93 aa).

Belongs to the SpoVG family.

Functionally, could be involved in septation. The chain is Putative septation protein SpoVG from Fusobacterium nucleatum subsp. nucleatum (strain ATCC 25586 / DSM 15643 / BCRC 10681 / CIP 101130 / JCM 8532 / KCTC 2640 / LMG 13131 / VPI 4355).